Reading from the N-terminus, the 146-residue chain is 3-hydroxyacyl-[acyl-carrier-protein] dehydratase FabZ (146 aa).

H49 is a catalytic residue.

It belongs to the thioester dehydratase family. FabZ subfamily.

The protein localises to the cytoplasm. It carries out the reaction a (3R)-hydroxyacyl-[ACP] = a (2E)-enoyl-[ACP] + H2O. Its function is as follows. Involved in unsaturated fatty acids biosynthesis. Catalyzes the dehydration of short chain beta-hydroxyacyl-ACPs and long chain saturated and unsaturated beta-hydroxyacyl-ACPs. The chain is 3-hydroxyacyl-[acyl-carrier-protein] dehydratase FabZ from Pseudomonas syringae pv. tomato (strain ATCC BAA-871 / DC3000).